A 388-amino-acid polypeptide reads, in one-letter code: N-acetylneuraminate epimerase (388 aa).

A signal peptide spans 1–26 (MFSLIRAKRLAIGIAALAWSTGAVMA). Kelch repeat units lie at residues 48 to 92 (MAYV…AAAG), 94 to 147 (KIFA…VGLA), 149 to 186 (GRIA…KLVD), 187 to 232 (SYMG…ATMG), 236 to 285 (FLLV…VAGA), 307 to 356 (ANAA…DAPG), and 358 to 387 (LLVV…LSVE). Glutamate 242 functions as the Proton acceptor in the catalytic mechanism.

It belongs to the NanM family. Homodimer.

Its subcellular location is the periplasm. The enzyme catalyses N-acetyl-alpha-neuraminate = N-acetyl-beta-neuraminate. Functionally, converts alpha-N-acetylneuranimic acid (Neu5Ac) to the beta-anomer, accelerating the equilibrium between the alpha- and beta-anomers. Probably facilitates sialidase-negative bacteria to compete successfully for limited amounts of extracellular Neu5Ac, which is likely taken up in the beta-anomer. In addition, the rapid removal of sialic acid from solution might be advantageous to the bacterium to damp down host responses. The polypeptide is N-acetylneuraminate epimerase (Brucella melitensis biotype 1 (strain ATCC 23456 / CCUG 17765 / NCTC 10094 / 16M)).